The following is a 469-amino-acid chain: Ribulose bisphosphate carboxylase large chain (469 aa).

At Lys5 the chain carries N6,N6,N6-trimethyllysine. Asn114 and Thr164 together coordinate substrate. The active-site Proton acceptor is Lys166. A substrate-binding site is contributed by Lys168. Mg(2+) contacts are provided by Lys192, Asp194, and Glu195. At Lys192 the chain carries N6-carboxylysine. His285 acts as the Proton acceptor in catalysis. Residues Arg286, His318, and Ser370 each contribute to the substrate site.

The protein belongs to the RuBisCO large chain family. Type I subfamily. As to quaternary structure, heterohexadecamer of 8 large chains and 8 small chains; disulfide-linked. The disulfide link is formed within the large subunit homodimers. The cofactor is Mg(2+). In terms of processing, the disulfide bond which can form in the large chain dimeric partners within the hexadecamer appears to be associated with oxidative stress and protein turnover.

It localises to the plastid. It is found in the chloroplast. The catalysed reaction is 2 (2R)-3-phosphoglycerate + 2 H(+) = D-ribulose 1,5-bisphosphate + CO2 + H2O. It catalyses the reaction D-ribulose 1,5-bisphosphate + O2 = 2-phosphoglycolate + (2R)-3-phosphoglycerate + 2 H(+). RuBisCO catalyzes two reactions: the carboxylation of D-ribulose 1,5-bisphosphate, the primary event in carbon dioxide fixation, as well as the oxidative fragmentation of the pentose substrate in the photorespiration process. Both reactions occur simultaneously and in competition at the same active site. The polypeptide is Ribulose bisphosphate carboxylase large chain (Cephalanthus occidentalis (Common buttonbush)).